Reading from the N-terminus, the 321-residue chain is 5,10-methylenetetrahydromethanopterin reductase (321 aa).

The protein belongs to the mer family.

Its subcellular location is the cytoplasm. The catalysed reaction is 5-methyl-5,6,7,8-tetrahydromethanopterin + oxidized coenzyme F420-(gamma-L-Glu)(n) + H(+) = 5,10-methylenetetrahydromethanopterin + reduced coenzyme F420-(gamma-L-Glu)(n). The protein operates within one-carbon metabolism; methanogenesis from CO(2); methyl-coenzyme M from 5,10-methylene-5,6,7,8-tetrahydromethanopterin: step 1/2. Catalyzes the reversible reduction of methylene-H(4)MPT to methyl-H(4)MPT. In Methanothermobacter thermautotrophicus (strain ATCC 29096 / DSM 1053 / JCM 10044 / NBRC 100330 / Delta H) (Methanobacterium thermoautotrophicum), this protein is 5,10-methylenetetrahydromethanopterin reductase.